The primary structure comprises 258 residues: Pimeloyl-[acyl-carrier protein] methyl ester esterase (258 aa).

Positions 16–242 (LVLLHGWGLN…AAHAPFISHP (227 aa)) constitute an AB hydrolase-1 domain. Residues tryptophan 22, 82 to 83 (SM), and 143 to 147 (FLALQ) contribute to the substrate site. Catalysis depends on serine 82, which acts as the Nucleophile. Residues aspartate 207 and histidine 235 contribute to the active site. Histidine 235 serves as a coordination point for substrate.

The protein belongs to the AB hydrolase superfamily. Carboxylesterase BioH family. In terms of assembly, monomer.

It is found in the cytoplasm. The enzyme catalyses 6-carboxyhexanoyl-[ACP] methyl ester + H2O = 6-carboxyhexanoyl-[ACP] + methanol + H(+). Its pathway is cofactor biosynthesis; biotin biosynthesis. The physiological role of BioH is to remove the methyl group introduced by BioC when the pimeloyl moiety is complete. It allows to synthesize pimeloyl-ACP via the fatty acid synthetic pathway through the hydrolysis of the ester bonds of pimeloyl-ACP esters. The polypeptide is Pimeloyl-[acyl-carrier protein] methyl ester esterase (Yersinia pseudotuberculosis serotype O:1b (strain IP 31758)).